The following is a 101-amino-acid chain: Acylphosphatase-1 (101 aa).

Ser2 is subject to N-acetylserine. Ser2 is subject to N-acetylalanine. Residues 11–101 form the Acylphosphatase-like domain; that stretch reads SVDYEVFGKV…LDYSDFQIVK (91 aa). Active-site residues include Arg26 and Asn44.

The protein belongs to the acylphosphatase family. As to expression, organ-common type isozyme is found in many different tissues.

It catalyses the reaction an acyl phosphate + H2O = a carboxylate + phosphate + H(+). This is Acylphosphatase-1 (ACYP1) from Sus scrofa (Pig).